The primary structure comprises 360 residues: Histidinol-phosphate aminotransferase (360 aa).

At Lys-213 the chain carries N6-(pyridoxal phosphate)lysine.

It belongs to the class-II pyridoxal-phosphate-dependent aminotransferase family. Histidinol-phosphate aminotransferase subfamily. In terms of assembly, homodimer. It depends on pyridoxal 5'-phosphate as a cofactor.

It catalyses the reaction L-histidinol phosphate + 2-oxoglutarate = 3-(imidazol-4-yl)-2-oxopropyl phosphate + L-glutamate. Its pathway is amino-acid biosynthesis; L-histidine biosynthesis; L-histidine from 5-phospho-alpha-D-ribose 1-diphosphate: step 7/9. In Baumannia cicadellinicola subsp. Homalodisca coagulata, this protein is Histidinol-phosphate aminotransferase.